Consider the following 153-residue polypeptide: Putative pre-16S rRNA nuclease (153 aa).

Belongs to the YqgF nuclease family.

It localises to the cytoplasm. Its function is as follows. Could be a nuclease involved in processing of the 5'-end of pre-16S rRNA. The chain is Putative pre-16S rRNA nuclease from Prochlorococcus marinus (strain AS9601).